A 223-amino-acid polypeptide reads, in one-letter code: Small ribosomal subunit protein uS3 (223 aa).

A KH type-2 domain is found at 39–107; that stretch reads VRSYLAKKLS…PVHINIQEIR (69 aa).

The protein belongs to the universal ribosomal protein uS3 family. As to quaternary structure, part of the 30S ribosomal subunit. Forms a tight complex with proteins S10 and S14.

Its function is as follows. Binds the lower part of the 30S subunit head. Binds mRNA in the 70S ribosome, positioning it for translation. The sequence is that of Small ribosomal subunit protein uS3 from Nitrosococcus oceani (strain ATCC 19707 / BCRC 17464 / JCM 30415 / NCIMB 11848 / C-107).